Consider the following 405-residue polypeptide: Insertion element IS110 uncharacterized 43.6 kDa protein (405 aa).

This chain is Insertion element IS110 uncharacterized 43.6 kDa protein, found in Streptomyces coelicolor (strain ATCC BAA-471 / A3(2) / M145).